The following is a 138-amino-acid chain: Glia maturation factor (138 aa).

The region spanning 3 to 138 (DNQICDISNE…TEEWLKAKLK (136 aa)) is the ADF-H domain.

It belongs to the actin-binding proteins ADF family. GMF subfamily. As to expression, in ovaries, expressed in follicular epithelium, in polar cells, migrating border cells, and centripedal cells (at protein level).

The protein resides in the cell projection. Its subcellular location is the lamellipodium. The protein localises to the cytoplasm. It localises to the perinuclear region. It is found in the nucleus. The protein resides in the cell cortex. Inhibits Arp2/3-mediated actin nucleation. Together with flr, promotes Arp2/3-nucleated actin filament array disassembly. Promotes debranching. Regulates lamellipodial protrusion dynamics possibly by facilitating lamellipodial retraction. In egg chambers, enhances the retraction dynamics of cellular extensions in border cells and thus together with flr plays an important role in directional migration of border cell clusters. The polypeptide is Glia maturation factor (Drosophila melanogaster (Fruit fly)).